The chain runs to 101 residues: Small ribosomal subunit protein uS14 (101 aa).

It belongs to the universal ribosomal protein uS14 family. Part of the 30S ribosomal subunit. Contacts proteins S3 and S10.

Its function is as follows. Binds 16S rRNA, required for the assembly of 30S particles and may also be responsible for determining the conformation of the 16S rRNA at the A site. This is Small ribosomal subunit protein uS14 from Ehrlichia ruminantium (strain Welgevonden).